We begin with the raw amino-acid sequence, 282 residues long: Bifunctional protein FolD (282 aa).

NADP(+)-binding positions include 166–168 and Ile232; that span reads GAS.

It belongs to the tetrahydrofolate dehydrogenase/cyclohydrolase family. Homodimer.

The catalysed reaction is (6R)-5,10-methylene-5,6,7,8-tetrahydrofolate + NADP(+) = (6R)-5,10-methenyltetrahydrofolate + NADPH. It catalyses the reaction (6R)-5,10-methenyltetrahydrofolate + H2O = (6R)-10-formyltetrahydrofolate + H(+). Its pathway is one-carbon metabolism; tetrahydrofolate interconversion. Catalyzes the oxidation of 5,10-methylenetetrahydrofolate to 5,10-methenyltetrahydrofolate and then the hydrolysis of 5,10-methenyltetrahydrofolate to 10-formyltetrahydrofolate. The polypeptide is Bifunctional protein FolD (Haemophilus influenzae (strain PittGG)).